The chain runs to 98 residues: Acylphosphatase (98 aa).

An Acylphosphatase-like domain is found at 12–98 (TYYVRVRGVV…DKRFERFQQH (87 aa)). Active-site residues include R27 and N45.

The protein belongs to the acylphosphatase family.

It catalyses the reaction an acyl phosphate + H2O = a carboxylate + phosphate + H(+). The sequence is that of Acylphosphatase (acyP) from Burkholderia thailandensis (strain ATCC 700388 / DSM 13276 / CCUG 48851 / CIP 106301 / E264).